A 322-amino-acid chain; its full sequence is UDP-N-acetylenolpyruvoylglucosamine reductase (322 aa).

Residues 36–202 (RAGGPAQVLF…TSVLFEGVPG (167 aa)) enclose the FAD-binding PCMH-type domain. The active site involves arginine 182. The active-site Proton donor is serine 231. Residue glutamate 301 is part of the active site.

This sequence belongs to the MurB family. The cofactor is FAD.

Its subcellular location is the cytoplasm. The catalysed reaction is UDP-N-acetyl-alpha-D-muramate + NADP(+) = UDP-N-acetyl-3-O-(1-carboxyvinyl)-alpha-D-glucosamine + NADPH + H(+). It participates in cell wall biogenesis; peptidoglycan biosynthesis. In terms of biological role, cell wall formation. This chain is UDP-N-acetylenolpyruvoylglucosamine reductase, found in Brucella suis biovar 1 (strain 1330).